The chain runs to 261 residues: 1-(5-phosphoribosyl)-5-[(5-phosphoribosylamino)methylideneamino] imidazole-4-carboxamide isomerase (261 aa).

The active-site Proton acceptor is Asp-15. Asp-136 serves as the catalytic Proton donor.

The protein belongs to the HisA/HisF family.

The protein localises to the cytoplasm. The enzyme catalyses 1-(5-phospho-beta-D-ribosyl)-5-[(5-phospho-beta-D-ribosylamino)methylideneamino]imidazole-4-carboxamide = 5-[(5-phospho-1-deoxy-D-ribulos-1-ylimino)methylamino]-1-(5-phospho-beta-D-ribosyl)imidazole-4-carboxamide. It functions in the pathway amino-acid biosynthesis; L-histidine biosynthesis; L-histidine from 5-phospho-alpha-D-ribose 1-diphosphate: step 4/9. This Synechococcus sp. (strain JA-2-3B'a(2-13)) (Cyanobacteria bacterium Yellowstone B-Prime) protein is 1-(5-phosphoribosyl)-5-[(5-phosphoribosylamino)methylideneamino] imidazole-4-carboxamide isomerase.